The chain runs to 344 residues: Transcription factor AIG1 (344 aa).

Residues 131 to 180 (AASKSHSEAERRRRERINTHLAKLRSILPNTTKTDKASLLAEVIQHMKEL) form the bHLH domain. Positions 313-344 (NDESNDNNNLEKSSSGGIKRQRTSKMVNRCYN) are disordered. The segment covering 318–327 (DNNNLEKSSS) has biased composition (low complexity).

In terms of assembly, homodimer. Interacts with LHW.

Its subcellular location is the nucleus. Transcription factor required for MONOPTEROS-dependent root initiation in embryo. Transcriptionally controlled by MONOPTEROS. This Arabidopsis thaliana (Mouse-ear cress) protein is Transcription factor AIG1 (BHLH32).